A 339-amino-acid chain; its full sequence is NADH-quinone oxidoreductase subunit H (339 aa).

A run of 9 helical transmembrane segments spans residues 10 to 30 (FPLTVIALKVVAITIPLILCV), 50 to 70 (PNVVGPFGLLQPIADAVKLLF), 82 to 102 (ILFILAPIITFVLSLIGWAVI), 115 to 135 (VGVLYILAISSLSVYGIIIAG), 155 to 175 (ISYEVSIGLVIVTVLLTTGTL), 187 to 207 (LPWWIDLMLLPMSIVFFISVL), 235 to 255 (MGFALFFLGEYANMILVSAMT), 275 to 295 (IPGFFWFVLKVMLLLFCFLWI), and 311 to 331 (GWKVFLPLTLFGVVLVSSVLF).

Belongs to the complex I subunit 1 family. NDH-1 is composed of 14 different subunits. Subunits NuoA, H, J, K, L, M, N constitute the membrane sector of the complex.

It is found in the cell inner membrane. The catalysed reaction is a quinone + NADH + 5 H(+)(in) = a quinol + NAD(+) + 4 H(+)(out). In terms of biological role, NDH-1 shuttles electrons from NADH, via FMN and iron-sulfur (Fe-S) centers, to quinones in the respiratory chain. The immediate electron acceptor for the enzyme in this species is believed to be ubiquinone. Couples the redox reaction to proton translocation (for every two electrons transferred, four hydrogen ions are translocated across the cytoplasmic membrane), and thus conserves the redox energy in a proton gradient. This subunit may bind ubiquinone. The protein is NADH-quinone oxidoreductase subunit H of Rickettsia typhi (strain ATCC VR-144 / Wilmington).